We begin with the raw amino-acid sequence, 446 residues long: Phosphoglucosamine mutase (446 aa).

Residue serine 102 is the Phosphoserine intermediate of the active site. Serine 102, aspartate 239, aspartate 241, and aspartate 243 together coordinate Mg(2+). Serine 102 is modified (phosphoserine).

It belongs to the phosphohexose mutase family. Mg(2+) serves as cofactor. Activated by phosphorylation.

It catalyses the reaction alpha-D-glucosamine 1-phosphate = D-glucosamine 6-phosphate. In terms of biological role, catalyzes the conversion of glucosamine-6-phosphate to glucosamine-1-phosphate. The polypeptide is Phosphoglucosamine mutase (Solibacter usitatus (strain Ellin6076)).